Consider the following 413-residue polypeptide: FAD-dependent monooxygenase vrtH (413 aa).

A signal peptide spans 1 to 23 (MQRANHTRPVLIIGAGLSGLAIG). Residue N5 is glycosylated (N-linked (GlcNAc...) asparagine). E37 and A48 together coordinate FAD. N94 is a glycosylation site (N-linked (GlcNAc...) asparagine). R120 contacts FAD. An N-linked (GlcNAc...) asparagine glycan is attached at N232. FAD contacts are provided by D327 and G340.

Belongs to the paxM FAD-dependent monooxygenase family. Requires FAD as cofactor.

The protein operates within secondary metabolite biosynthesis; terpenoid biosynthesis. Functionally, FAD-dependent monooxygenase; part of the gene cluster that mediates the biosynthesis of viridicatumtoxin, a tetracycline-like fungal meroterpenoid with a unique, fused spirobicyclic ring system. The first step of the pathway is the production of the malonamoyl-CoA starter unit for the polyketide synthase vrtA. The aldolase vrtJ may be involved in the synthesis of the malonamate substrate for malonamoyl-CoA synthetase vrtB. The polyketide synthase vrtA then may utilize the malonamoyl-CoA starter unit, followed by sequential condensation of eight malonyl-CoA units to form the polyketide backbone. The cyclization of the last ring could be mediated by the lactamase-like protein vrtG. The proposed post-PKS tailoring steps are a hydroxylation at C5 catalyzed the cytochrome P450 monooxygenase vrtE, a hydroxylation at C12a catalyzed by VrtH and/or VrtI, and an O-methylation by the O-methyltransferase vrtF. VrtC is then proposed to catalyze the transfer of a geranyl group synthesized by vrtD to the aromatic C ring of the tetracyclic polyketide intermediate of viridicatumtoxin to yield previridicatumtoxin. Finally, the cytochrome P450 monooxygenase vrtK catalyzes the spirocyclization of the geranyl moiety of previridicatumtoxin to afford viridicatumtoxin. The sequence is that of FAD-dependent monooxygenase vrtH from Penicillium aethiopicum.